The primary structure comprises 425 residues: Serine--tRNA ligase (425 aa).

L-serine is bound at residue 230-232 (TAE). 261-263 (RSE) contacts ATP. Residue Glu284 coordinates L-serine. Residue 348-351 (EISS) coordinates ATP. Ser384 contacts L-serine.

This sequence belongs to the class-II aminoacyl-tRNA synthetase family. Type-1 seryl-tRNA synthetase subfamily. Homodimer. The tRNA molecule binds across the dimer.

It is found in the cytoplasm. It catalyses the reaction tRNA(Ser) + L-serine + ATP = L-seryl-tRNA(Ser) + AMP + diphosphate + H(+). The enzyme catalyses tRNA(Sec) + L-serine + ATP = L-seryl-tRNA(Sec) + AMP + diphosphate + H(+). The protein operates within aminoacyl-tRNA biosynthesis; selenocysteinyl-tRNA(Sec) biosynthesis; L-seryl-tRNA(Sec) from L-serine and tRNA(Sec): step 1/1. In terms of biological role, catalyzes the attachment of serine to tRNA(Ser). Is also able to aminoacylate tRNA(Sec) with serine, to form the misacylated tRNA L-seryl-tRNA(Sec), which will be further converted into selenocysteinyl-tRNA(Sec). This Streptococcus pyogenes serotype M49 (strain NZ131) protein is Serine--tRNA ligase.